The sequence spans 272 residues: Thymidine phosphorylase (272 aa).

It belongs to the thymidine/pyrimidine-nucleoside phosphorylase family. In terms of assembly, homodimer.

It carries out the reaction thymidine + phosphate = 2-deoxy-alpha-D-ribose 1-phosphate + thymine. The enzymes which catalyze the reversible phosphorolysis of pyrimidine nucleosides are involved in the degradation of these compounds and in their utilization as carbon and energy sources, or in the rescue of pyrimidine bases for nucleotide synthesis. In Metamycoplasma hominis (Mycoplasma hominis), this protein is Thymidine phosphorylase (deoA).